The following is a 290-amino-acid chain: MSQFNVLNRYLFTDAHARGELVQLSSSFESIIKNHNYPVGVEKLLGELLCATCLLTATLKFEGDITVQLQGDGPVGYMSVSGNNKQQMRGIAKMAEETSADTLQTLIGKGTMIITIRPNAGEAYQGVVALDEESLADCLAHYFDVSEQIPTKIWLFCDTEQQLAAGALVQLLPDGDGSTENKEQQQSDFEHLCQLTNTIKSEEVFSLEAEALLYRLYHQEQVNIFEPQMVSYLCGCSADKCLSAISQIEPSEIKAILAEHGKISMTCDYCITTYDFDELSLKSFISKVNH.

Cystine bridges form between C234–C236 and C267–C270.

The protein belongs to the HSP33 family. Post-translationally, under oxidizing conditions two disulfide bonds are formed involving the reactive cysteines. Under reducing conditions zinc is bound to the reactive cysteines and the protein is inactive.

The protein resides in the cytoplasm. In terms of biological role, redox regulated molecular chaperone. Protects both thermally unfolding and oxidatively damaged proteins from irreversible aggregation. Plays an important role in the bacterial defense system toward oxidative stress. This Colwellia psychrerythraea (strain 34H / ATCC BAA-681) (Vibrio psychroerythus) protein is 33 kDa chaperonin.